Consider the following 401-residue polypeptide: Probable tRNA sulfurtransferase (401 aa).

Residues 60 to 165 (EEICSLLKNI…EEATFLTIRN (106 aa)) enclose the THUMP domain. ATP contacts are provided by residues 183–184 (ML), 208–209 (HF), Arg265, Gly287, and Gln296.

Belongs to the ThiI family.

It is found in the cytoplasm. It carries out the reaction [ThiI sulfur-carrier protein]-S-sulfanyl-L-cysteine + a uridine in tRNA + 2 reduced [2Fe-2S]-[ferredoxin] + ATP + H(+) = [ThiI sulfur-carrier protein]-L-cysteine + a 4-thiouridine in tRNA + 2 oxidized [2Fe-2S]-[ferredoxin] + AMP + diphosphate. The enzyme catalyses [ThiS sulfur-carrier protein]-C-terminal Gly-Gly-AMP + S-sulfanyl-L-cysteinyl-[cysteine desulfurase] + AH2 = [ThiS sulfur-carrier protein]-C-terminal-Gly-aminoethanethioate + L-cysteinyl-[cysteine desulfurase] + A + AMP + 2 H(+). It participates in cofactor biosynthesis; thiamine diphosphate biosynthesis. Its function is as follows. Catalyzes the ATP-dependent transfer of a sulfur to tRNA to produce 4-thiouridine in position 8 of tRNAs, which functions as a near-UV photosensor. Also catalyzes the transfer of sulfur to the sulfur carrier protein ThiS, forming ThiS-thiocarboxylate. This is a step in the synthesis of thiazole, in the thiamine biosynthesis pathway. The sulfur is donated as persulfide by IscS. This chain is Probable tRNA sulfurtransferase, found in Bacillus velezensis (strain DSM 23117 / BGSC 10A6 / LMG 26770 / FZB42) (Bacillus amyloliquefaciens subsp. plantarum).